Here is a 720-residue protein sequence, read N- to C-terminus: Glycine--tRNA ligase beta subunit (720 aa).

The protein belongs to the class-II aminoacyl-tRNA synthetase family. In terms of assembly, tetramer of two alpha and two beta subunits.

It is found in the cytoplasm. The catalysed reaction is tRNA(Gly) + glycine + ATP = glycyl-tRNA(Gly) + AMP + diphosphate. The polypeptide is Glycine--tRNA ligase beta subunit (Acidovorax sp. (strain JS42)).